Here is a 277-residue protein sequence, read N- to C-terminus: Large ribosomal subunit protein mL46 (277 aa).

An N6-succinyllysine modification is found at Lys-217. Residue Lys-228 is modified to N6-acetyllysine. Lys-246 carries the post-translational modification N6-succinyllysine.

Belongs to the mitochondrion-specific ribosomal protein mL46 family. In terms of assembly, component of the mitochondrial ribosome large subunit (39S) which comprises a 16S rRNA and about 50 distinct proteins.

The protein resides in the mitochondrion. This chain is Large ribosomal subunit protein mL46 (Mrpl46), found in Rattus norvegicus (Rat).